Reading from the N-terminus, the 220-residue chain is Deoxyribose-phosphate aldolase (220 aa).

Asp-89 serves as the catalytic Proton donor/acceptor. Residue Lys-151 is the Schiff-base intermediate with acetaldehyde of the active site. Lys-180 serves as the catalytic Proton donor/acceptor.

The protein belongs to the DeoC/FbaB aldolase family. DeoC type 1 subfamily.

Its subcellular location is the cytoplasm. The catalysed reaction is 2-deoxy-D-ribose 5-phosphate = D-glyceraldehyde 3-phosphate + acetaldehyde. It functions in the pathway carbohydrate degradation; 2-deoxy-D-ribose 1-phosphate degradation; D-glyceraldehyde 3-phosphate and acetaldehyde from 2-deoxy-alpha-D-ribose 1-phosphate: step 2/2. Its function is as follows. Catalyzes a reversible aldol reaction between acetaldehyde and D-glyceraldehyde 3-phosphate to generate 2-deoxy-D-ribose 5-phosphate. The protein is Deoxyribose-phosphate aldolase of Streptococcus gordonii (strain Challis / ATCC 35105 / BCRC 15272 / CH1 / DL1 / V288).